A 413-amino-acid chain; its full sequence is S-adenosylmethionine synthase (413 aa).

Position 15 (His-15) interacts with ATP. Position 17 (Asp-17) interacts with Mg(2+). Position 43 (Glu-43) interacts with K(+). L-methionine contacts are provided by Glu-56 and Gln-100. Residues 100 to 110 (QSPDISQGVNE) form a flexible loop region. ATP is bound by residues 171-173 (DGK), 248-249 (KF), Asp-257, 263-264 (RK), Ala-280, and Lys-284. An L-methionine-binding site is contributed by Asp-257. Lys-288 provides a ligand contact to L-methionine.

This sequence belongs to the AdoMet synthase family. As to quaternary structure, homotetramer; dimer of dimers. The cofactor is Mg(2+). K(+) is required as a cofactor.

The protein localises to the cytoplasm. It catalyses the reaction L-methionine + ATP + H2O = S-adenosyl-L-methionine + phosphate + diphosphate. It participates in amino-acid biosynthesis; S-adenosyl-L-methionine biosynthesis; S-adenosyl-L-methionine from L-methionine: step 1/1. Functionally, catalyzes the formation of S-adenosylmethionine (AdoMet) from methionine and ATP. The overall synthetic reaction is composed of two sequential steps, AdoMet formation and the subsequent tripolyphosphate hydrolysis which occurs prior to release of AdoMet from the enzyme. This Prochlorococcus marinus (strain MIT 9515) protein is S-adenosylmethionine synthase.